A 132-amino-acid chain; its full sequence is Small ribosomal subunit protein uS8 (132 aa).

The protein belongs to the universal ribosomal protein uS8 family. In terms of assembly, part of the 30S ribosomal subunit. Contacts proteins S5 and S12.

Its function is as follows. One of the primary rRNA binding proteins, it binds directly to 16S rRNA central domain where it helps coordinate assembly of the platform of the 30S subunit. The polypeptide is Small ribosomal subunit protein uS8 (Lactobacillus acidophilus (strain ATCC 700396 / NCK56 / N2 / NCFM)).